The chain runs to 1364 residues: DNA-directed RNA polymerase subunit beta (1364 aa).

The protein belongs to the RNA polymerase beta chain family. As to quaternary structure, the RNAP catalytic core consists of 2 alpha, 1 beta, 1 beta' and 1 omega subunit. When a sigma factor is associated with the core the holoenzyme is formed, which can initiate transcription.

The enzyme catalyses RNA(n) + a ribonucleoside 5'-triphosphate = RNA(n+1) + diphosphate. Its function is as follows. DNA-dependent RNA polymerase catalyzes the transcription of DNA into RNA using the four ribonucleoside triphosphates as substrates. This is DNA-directed RNA polymerase subunit beta from Desulfatibacillum aliphaticivorans.